A 311-amino-acid chain; its full sequence is 4-diphosphocytidyl-2-C-methyl-D-erythritol kinase (311 aa).

Residue K9 is part of the active site. 95 to 105 (PLGAGLAGGST) is an ATP binding site. The active site involves D137.

Belongs to the GHMP kinase family. IspE subfamily.

It catalyses the reaction 4-CDP-2-C-methyl-D-erythritol + ATP = 4-CDP-2-C-methyl-D-erythritol 2-phosphate + ADP + H(+). Its pathway is isoprenoid biosynthesis; isopentenyl diphosphate biosynthesis via DXP pathway; isopentenyl diphosphate from 1-deoxy-D-xylulose 5-phosphate: step 3/6. In terms of biological role, catalyzes the phosphorylation of the position 2 hydroxy group of 4-diphosphocytidyl-2C-methyl-D-erythritol. The chain is 4-diphosphocytidyl-2-C-methyl-D-erythritol kinase from Thermosynechococcus vestitus (strain NIES-2133 / IAM M-273 / BP-1).